We begin with the raw amino-acid sequence, 366 residues long: Photosynthetic reaction center cytochrome c subunit (366 aa).

Positions 1–22 (MALAVRISTLTVAVTAAALLAG) are cleaved as a signal peptide. Cys23 is lipidated: N-palmitoyl cysteine. Cys23 is lipidated: S-diacylglycerol cysteine. Met94, Cys107, Cys110, His111, Met129, His143, Cys151, Cys154, His155, Met238, Cys249, Cys252, His253, Cys309, Cys312, and His313 together coordinate heme.

As to quaternary structure, component of the photosynthetic reaction center composed of protein subunits L (PufL), M (PufM), H (PuhA) and cytochrome C (PufC). The reaction center interacts with light-harvesting antenna complex LH1. In terms of processing, binds 4 heme groups per subunit.

The protein resides in the cellular chromatophore membrane. In terms of biological role, the reaction center of purple bacteria contains a tightly bound cytochrome molecule which re-reduces the photo oxidized primary electron donor. In Rubrivivax gelatinosus (strain NBRC 100245 / IL144), this protein is Photosynthetic reaction center cytochrome c subunit (pufC).